We begin with the raw amino-acid sequence, 643 residues long: Sodium/iodide cotransporter (643 aa).

Over 1–14 the chain is Extracellular; sequence MEAVETGERPTFGA. Residues 15–31 traverse the membrane as a helical segment; the sequence is WDYGVFALMLLVSTGIG. At 32–56 the chain is on the cytoplasmic side; the sequence is LWVGLARGGQRSAEDFFTGGRRLAA. A discontinuously helical transmembrane segment spans residues 57–80; sequence LPVGLSLSASFMSAVQVLGVPSEA. Na(+) is bound by residues Ser69, Val71, and Gln72. Position 76 (Val76) interacts with iodide. Over 81–84 the chain is Extracellular; it reads YRYG. A helical membrane pass occupies residues 85-105; sequence LKFLWMCLGQLLNSVLTALLF. Met90 contacts iodide. The Cytoplasmic portion of the chain corresponds to 106–130; the sequence is MPVFYRLGLTSTYEYLEMRFSRAVR. The chain crosses the membrane as a helical span at residues 131–157; sequence LCGTLQYIVATMLYTGIVIYAPALILN. Tyr144 is a binding site for Na(+). Over 158–163 the chain is Extracellular; the sequence is QVTGLD. Residues 164 to 181 traverse the membrane as a helical segment; the sequence is IWASLLSTGIICTFYTAV. Topologically, residues 182–189 are cytoplasmic; the sequence is GGMKAVVW. Residues 190–208 form a helical membrane-spanning segment; it reads TDVFQVVVMLSGFWVVLAR. Residues 209–243 lie on the Extracellular side of the membrane; that stretch reads GVMLVGGPRQVLTLAQNHSRINLMDFNPDPRSRYT. The discontinuously helical transmembrane segment at 244-266 threads the bilayer; the sequence is FWTFVVGGTLVWLSMYGVNQAQV. Trp255 contacts iodide. Met258 is a binding site for Na(+). Over 267 to 278 the chain is Cytoplasmic; the sequence is QRYVACRTEKQA. The chain crosses the membrane as a helical span at residues 279-301; sequence KLALLINQVGLFLIVSSAACCGI. Over 302–335 the chain is Extracellular; that stretch reads VMFVFYTDCDPLLLGRISAPDQYMPLLVLDIFED. A helical membrane pass occupies residues 336 to 363; the sequence is LPGVPGLFLACAYSGTLSTASTSINAMA. At 364–386 the chain is on the cytoplasmic side; it reads AVTVEDLIKPRLRSLAPRKLVII. A helical transmembrane segment spans residues 387-408; the sequence is SKGLSLIYGSACLTVAALSSLL. The Extracellular portion of the chain corresponds to 409-411; it reads GGG. A helical membrane pass occupies residues 412–437; it reads VLQGSFTVMGVISGPLLGAFILGMFL. Leu413 provides a ligand contact to iodide. Na(+)-binding residues include Ser416 and Phe417. Phe417 lines the iodide pocket. The Cytoplasmic portion of the chain corresponds to 438–441; it reads PACN. Residues 442 to 465 form a helical membrane-spanning segment; sequence TPGVLAGLGAGLALSLWVALGATL. The Extracellular portion of the chain corresponds to 466-525; sequence YPPSEQTMRVLPSSAARCVALSVNASGLLDPALLPANDSSRAPSSGMDASRPALADSFYA. 2 N-linked (GlcNAc...) asparagine glycosylation sites follow: Asn489 and Asn502. A helical transmembrane segment spans residues 526 to 550; the sequence is ISYLYYGALGTLTTVLCGALISCLT. Over 551 to 643 the chain is Cytoplasmic; the sequence is GPTKRSTLAP…GGRDQQETNL (93 aa). A Phosphoserine; by PKA modification is found at Ser556. The disordered stretch occupies residues 623 to 643; the sequence is AGSWTPCVGHDGGRDQQETNL. Positions 633 to 643 are enriched in basic and acidic residues; the sequence is DGGRDQQETNL.

The protein belongs to the sodium:solute symporter (SSF) (TC 2.A.21) family. Monomer. Glycosylated. In terms of tissue distribution, expression is primarily in thyroid tissue, but also to a lower extent in mammary gland and ovary. Expression is reduced in tumors.

It is found in the cell membrane. It localises to the cytoplasm. The enzyme catalyses iodide(out) + 2 Na(+)(out) = iodide(in) + 2 Na(+)(in). It catalyses the reaction chlorate(out) + 2 Na(+)(out) = chlorate(in) + 2 Na(+)(in). The catalysed reaction is thiocyanate(out) + 2 Na(+)(out) = thiocyanate(in) + 2 Na(+)(in). It carries out the reaction nitrate(out) + 2 Na(+)(out) = nitrate(in) + 2 Na(+)(in). The enzyme catalyses selenocyanate(out) + 2 Na(+)(out) = selenocyanate(in) + 2 Na(+)(in). Its activity is regulated as follows. Dysidenin and perchlorate inhibit iodide transport activity. Oxyanions inhibit iodide transport activity by blocking the binding sites for iodide and one of the sodium ions. Functionally, sodium:iodide symporter that mediates the transport of iodide into the thyroid gland. Can also mediate the transport of chlorate, thiocynate, nitrate and selenocynate. In Homo sapiens (Human), this protein is Sodium/iodide cotransporter (SLC5A5).